We begin with the raw amino-acid sequence, 1390 residues long: DNA-directed RNA polymerase subunit beta'' (1390 aa).

Cys224, Cys295, Cys302, and Cys305 together coordinate Zn(2+).

It belongs to the RNA polymerase beta' chain family. RpoC2 subfamily. In terms of assembly, in plastids the minimal PEP RNA polymerase catalytic core is composed of four subunits: alpha, beta, beta', and beta''. When a (nuclear-encoded) sigma factor is associated with the core the holoenzyme is formed, which can initiate transcription. Requires Zn(2+) as cofactor.

It is found in the plastid. Its subcellular location is the chloroplast. The catalysed reaction is RNA(n) + a ribonucleoside 5'-triphosphate = RNA(n+1) + diphosphate. In terms of biological role, DNA-dependent RNA polymerase catalyzes the transcription of DNA into RNA using the four ribonucleoside triphosphates as substrates. The polypeptide is DNA-directed RNA polymerase subunit beta'' (Daucus carota (Wild carrot)).